Consider the following 136-residue polypeptide: Piercer of microtubule wall 1 protein (136 aa).

Residues 1–16 (MSEEDPKACAEPEEPK) are compositionally biased toward basic and acidic residues. Positions 1-27 (MSEEDPKACAEPEEPKAGPPPEKTSDW) are disordered.

It belongs to the PIERCE1 family. Microtubule inner protein component of sperm flagellar doublet microtubules. Interacts with CFAP53, ODAD1 and ODAD3; the interactions link the outer dynein arms docking complex (ODA-DC) to the internal microtubule inner proteins (MIP) in cilium axoneme. As to expression, expressed in trachea multiciliated cells.

It localises to the cytoplasm. The protein localises to the cytoskeleton. Its subcellular location is the cilium axoneme. The protein resides in the flagellum axoneme. Functionally, microtubule inner protein involved in the attachment of outer dynein arms (ODAs) to dynein-decorated doublet microtubules (DMTs) in cilia axoneme, which is required for motile cilia beating. Functions at the initial step of left-right asymmetry specification of the visceral organs. This chain is Piercer of microtubule wall 1 protein (PIERCE1), found in Bos taurus (Bovine).